Here is an 876-residue protein sequence, read N- to C-terminus: Valine--tRNA ligase (876 aa).

The 'HIGH' region signature appears at P44–H54. A 'KMSKS' region motif is present at residues K520–S524. K523 is a binding site for ATP. The stretch at L805–A876 forms a coiled coil.

It belongs to the class-I aminoacyl-tRNA synthetase family. ValS type 1 subfamily. In terms of assembly, monomer.

The protein resides in the cytoplasm. The enzyme catalyses tRNA(Val) + L-valine + ATP = L-valyl-tRNA(Val) + AMP + diphosphate. Its function is as follows. Catalyzes the attachment of valine to tRNA(Val). As ValRS can inadvertently accommodate and process structurally similar amino acids such as threonine, to avoid such errors, it has a 'posttransfer' editing activity that hydrolyzes mischarged Thr-tRNA(Val) in a tRNA-dependent manner. In Staphylococcus aureus (strain bovine RF122 / ET3-1), this protein is Valine--tRNA ligase.